A 222-amino-acid polypeptide reads, in one-letter code: Endonuclease V (222 aa).

2 residues coordinate Mg(2+): Asp34 and Asp102.

This sequence belongs to the endonuclease V family. Mg(2+) serves as cofactor.

Its subcellular location is the cytoplasm. The enzyme catalyses Endonucleolytic cleavage at apurinic or apyrimidinic sites to products with a 5'-phosphate.. Functionally, DNA repair enzyme involved in the repair of deaminated bases. Selectively cleaves double-stranded DNA at the second phosphodiester bond 3' to a deoxyinosine leaving behind the intact lesion on the nicked DNA. This Proteus mirabilis (strain HI4320) protein is Endonuclease V.